The primary structure comprises 272 residues: Exosome complex component Rrp42 (272 aa).

Belongs to the RNase PH family. Rrp42 subfamily. As to quaternary structure, component of the archaeal exosome complex. Forms a hexameric ring-like arrangement composed of 3 Rrp41-Rrp42 heterodimers. The hexameric ring associates with a trimer of Rrp4 and/or Csl4 subunits.

It localises to the cytoplasm. Its function is as follows. Non-catalytic component of the exosome, which is a complex involved in RNA degradation. Contributes to the structuring of the Rrp41 active site. The chain is Exosome complex component Rrp42 from Thermococcus onnurineus (strain NA1).